The primary structure comprises 94 residues: C-C motif chemokine 17 (94 aa).

The signal sequence occupies residues 1 to 23 (MAPLKMLALVILLLGASLQHIHA). Intrachain disulfides connect Cys-33/Cys-57 and Cys-34/Cys-73.

Belongs to the intercrine beta (chemokine CC) family.

The protein resides in the secreted. Its function is as follows. Chemokine, which displays chemotactic activity for T lymphocytes, preferentially Th2 cells, but not monocytes or granulocytes. Therefore plays an important role in a wide range of inflammatory and immunological processes. Acts by binding to CCR4 at T-cell surface. Mediates GM-CSF/CSF2-driven pain and inflammation. In the brain, required to maintain the typical, highly branched morphology of hippocampal microglia under homeostatic conditions. May be important for the appropriate adaptation of microglial morphology and synaptic plasticity to acute lipopolysaccharide (LPS)-induced neuroinflammation. Plays a role in wound healing, mainly by inducing fibroblast migration into the wound. The chain is C-C motif chemokine 17 (CCL17) from Macaca mulatta (Rhesus macaque).